Reading from the N-terminus, the 275-residue chain is Large ribosomal subunit protein uL2c (275 aa).

The tract at residues 224–275 (AMNPVDHPHGGGEGRTPIGRKKPVTPWGYSALGKKSRKRNRYSDASILRRRE) is disordered.

It belongs to the universal ribosomal protein uL2 family. In terms of assembly, part of the 50S ribosomal subunit.

The protein localises to the plastid. The protein resides in the chloroplast. The polypeptide is Large ribosomal subunit protein uL2c (rpl2) (Picea abies (Norway spruce)).